We begin with the raw amino-acid sequence, 145 residues long: Large ribosomal subunit protein uL11 (145 aa).

The protein belongs to the universal ribosomal protein uL11 family. In terms of assembly, part of the ribosomal stalk of the 50S ribosomal subunit. Interacts with L10 and the large rRNA to form the base of the stalk. L10 forms an elongated spine to which L12 dimers bind in a sequential fashion forming a multimeric L10(L12)X complex. Post-translationally, one or more lysine residues are methylated.

Functionally, forms part of the ribosomal stalk which helps the ribosome interact with GTP-bound translation factors. The polypeptide is Large ribosomal subunit protein uL11 (Rickettsia typhi (strain ATCC VR-144 / Wilmington)).